The primary structure comprises 230 residues: Flagellar L-ring protein (230 aa).

Residues Met1 to Gly22 form the signal peptide. The N-palmitoyl cysteine moiety is linked to residue Cys23. Cys23 carries S-diacylglycerol cysteine lipidation.

It belongs to the FlgH family. The basal body constitutes a major portion of the flagellar organelle and consists of four rings (L,P,S, and M) mounted on a central rod.

It is found in the cell outer membrane. The protein resides in the bacterial flagellum basal body. In terms of biological role, assembles around the rod to form the L-ring and probably protects the motor/basal body from shearing forces during rotation. The polypeptide is Flagellar L-ring protein (Stenotrophomonas maltophilia (strain R551-3)).